The sequence spans 499 residues: Glutamate--tRNA ligase (499 aa).

Residues 12–22 (PSPTGHLHIGN) carry the 'HIGH' region motif. The short motif at 259–263 (KLSKR) is the 'KMSKS' region element. An ATP-binding site is contributed by Lys262.

The protein belongs to the class-I aminoacyl-tRNA synthetase family. Glutamate--tRNA ligase type 1 subfamily. Monomer.

Its subcellular location is the cytoplasm. The enzyme catalyses tRNA(Glu) + L-glutamate + ATP = L-glutamyl-tRNA(Glu) + AMP + diphosphate. Catalyzes the attachment of glutamate to tRNA(Glu) in a two-step reaction: glutamate is first activated by ATP to form Glu-AMP and then transferred to the acceptor end of tRNA(Glu). The chain is Glutamate--tRNA ligase from Lactobacillus gasseri (strain ATCC 33323 / DSM 20243 / BCRC 14619 / CIP 102991 / JCM 1131 / KCTC 3163 / NCIMB 11718 / NCTC 13722 / AM63).